The primary structure comprises 426 residues: Histidine--tRNA ligase (426 aa).

This sequence belongs to the class-II aminoacyl-tRNA synthetase family. As to quaternary structure, homodimer.

It localises to the cytoplasm. It catalyses the reaction tRNA(His) + L-histidine + ATP = L-histidyl-tRNA(His) + AMP + diphosphate + H(+). The protein is Histidine--tRNA ligase of Streptococcus thermophilus (strain CNRZ 1066).